The following is a 480-amino-acid chain: Protein nucleotidyltransferase YdiU (480 aa).

8 residues coordinate ATP: glycine 86, glycine 88, arginine 89, lysine 109, aspartate 121, glycine 122, arginine 172, and arginine 179. Aspartate 248 acts as the Proton acceptor in catalysis. Mg(2+)-binding residues include asparagine 249 and aspartate 258. Aspartate 258 is an ATP binding site.

Belongs to the SELO family. Mg(2+) is required as a cofactor. Mn(2+) serves as cofactor.

The enzyme catalyses L-seryl-[protein] + ATP = 3-O-(5'-adenylyl)-L-seryl-[protein] + diphosphate. The catalysed reaction is L-threonyl-[protein] + ATP = 3-O-(5'-adenylyl)-L-threonyl-[protein] + diphosphate. It catalyses the reaction L-tyrosyl-[protein] + ATP = O-(5'-adenylyl)-L-tyrosyl-[protein] + diphosphate. It carries out the reaction L-histidyl-[protein] + UTP = N(tele)-(5'-uridylyl)-L-histidyl-[protein] + diphosphate. The enzyme catalyses L-seryl-[protein] + UTP = O-(5'-uridylyl)-L-seryl-[protein] + diphosphate. The catalysed reaction is L-tyrosyl-[protein] + UTP = O-(5'-uridylyl)-L-tyrosyl-[protein] + diphosphate. Functionally, nucleotidyltransferase involved in the post-translational modification of proteins. It can catalyze the addition of adenosine monophosphate (AMP) or uridine monophosphate (UMP) to a protein, resulting in modifications known as AMPylation and UMPylation. The polypeptide is Protein nucleotidyltransferase YdiU (Salmonella enteritidis PT4 (strain P125109)).